The sequence spans 669 residues: MQGVPGFNTVPNPNHYDKSIVLDIKPLRSLKPVFPNGNQGPPFVGCPPFGPSSSEYSSFFPFGAQQPTHDTPDLNQTQNTPIPSFVPPLRSYRTPTKTNGPSSSSGTKRGVGRPKGTTSVKKKEKKTVANEPNLDVQVVKKFSSDFDSGISAAEREDGNAYLVSSVLMRFDAVRRRLSQVEFTKSATSKAAGTLMSNGVRTNMKKRVGTVPGIEVGDIFFSRIEMCLVGLHMQTMAGIDYIISKAGSDEESLATSIVSSGRYEGEAQDPESLIYSGQGGNADKNRQASDQKLERGNLALENSLRKGNGVRVVRGEEDAASKTGKIYIYDGLYSISESWVEKGKSGCNTFKYKLVRQPGQPPAFGFWKSVQKWKEGLTTRPGLILPDLTSGAESKPVSLVNDVDEDKGPAYFTYTSSLKYSETFKLTQPVIGCSCSGSCSPGNHNCSCIRKNDGDLPYLNGVILVSRRPVIYECGPTCPCHASCKNRVIQTGLKSRLEVFKTRNRGWGLRSWDSLRAGSFICEYAGEVKDNGNLRGNQEEDAYVFDTSRVFNSFKWNYEPELVDEDPSTEVPEEFNLPSPLLISAKKFGNVARFMNHSCSPNVFWQPVIREGNGESVIHIAFFAMRHIPPMAELTYDYGISPTSEARDESLLHGQRTCLCGSEQCRGSFG.

2 disordered regions span residues 56 to 127 (YSSF…EKKT) and 270 to 290 (ESLIYSGQGGNADKNRQASDQ). Composition is skewed to polar residues over residues 65–82 (QQPTHDTPDLNQTQNTPI) and 93–107 (RTPTKTNGPSSSSGT). The segment at residues 108–120 (KRGVGRPKGTTSV) is a DNA-binding region (a.T hook). Positions 208-355 (GTVPGIEVGD…CNTFKYKLVR (148 aa)) constitute a YDG domain. Residues 430–491 (IGCSCSGSCS…SCKNRVIQTG (62 aa)) enclose the Pre-SET domain. The Zn(2+) site is built by cysteine 432, cysteine 434, cysteine 438, cysteine 445, cysteine 447, cysteine 473, cysteine 477, cysteine 479, and cysteine 483. An SET domain is found at 494–638 (SRLEVFKTRN…PMAELTYDYG (145 aa)). S-adenosyl-L-methionine contacts are provided by residues 504–506 (RGW), aspartate 540, tyrosine 542, arginine 592, and 595–596 (NH). The Zn(2+) site is built by cysteine 598, cysteine 657, cysteine 659, and cysteine 664. The Post-SET domain maps to 653-669 (GQRTCLCGSEQCRGSFG).

The protein belongs to the class V-like SAM-binding methyltransferase superfamily. Histone-lysine methyltransferase family. Suvar3-9 subfamily. Expressed in leaves stems and flowers.

It is found in the nucleus. It localises to the chromosome. Its subcellular location is the centromere. The catalysed reaction is L-lysyl(9)-[histone H3] + S-adenosyl-L-methionine = N(6)-methyl-L-lysyl(9)-[histone H3] + S-adenosyl-L-homocysteine + H(+). Histone methyltransferase. Methylates 'Lys-9' of histone H3. H3 'Lys-9' methylation represents a specific tag for epigenetic transcriptional repression. The chain is Histone-lysine N-methyltransferase, H3 lysine-9 specific SUVH3 (SUVH3) from Arabidopsis thaliana (Mouse-ear cress).